Reading from the N-terminus, the 549-residue chain is Glucose-6-phosphate isomerase (549 aa).

Lys-80, Lys-228, and Lys-234 each carry N6-acetyllysine. Glu-355 serves as the catalytic Proton donor. Catalysis depends on residues His-386 and Lys-514.

It belongs to the GPI family.

It is found in the cytoplasm. The enzyme catalyses alpha-D-glucose 6-phosphate = beta-D-fructose 6-phosphate. Its pathway is carbohydrate biosynthesis; gluconeogenesis. It functions in the pathway carbohydrate degradation; glycolysis; D-glyceraldehyde 3-phosphate and glycerone phosphate from D-glucose: step 2/4. In terms of biological role, catalyzes the reversible isomerization of glucose-6-phosphate to fructose-6-phosphate. This Escherichia coli O17:K52:H18 (strain UMN026 / ExPEC) protein is Glucose-6-phosphate isomerase.